The primary structure comprises 485 residues: Bifunctional protein HldE (485 aa).

The interval 1-326 (MDFSSTRVLC…AELDESAISN (326 aa)) is ribokinase. 195 to 198 (NVKE) provides a ligand contact to ATP. The active site involves Asp-271. The tract at residues 354-485 (FTNGCFDILH…GIVKKISTLT (132 aa)) is cytidylyltransferase.

In the N-terminal section; belongs to the carbohydrate kinase PfkB family. It in the C-terminal section; belongs to the cytidylyltransferase family. Homodimer.

It carries out the reaction D-glycero-beta-D-manno-heptose 7-phosphate + ATP = D-glycero-beta-D-manno-heptose 1,7-bisphosphate + ADP + H(+). The enzyme catalyses D-glycero-beta-D-manno-heptose 1-phosphate + ATP + H(+) = ADP-D-glycero-beta-D-manno-heptose + diphosphate. It participates in nucleotide-sugar biosynthesis; ADP-L-glycero-beta-D-manno-heptose biosynthesis; ADP-L-glycero-beta-D-manno-heptose from D-glycero-beta-D-manno-heptose 7-phosphate: step 1/4. It functions in the pathway nucleotide-sugar biosynthesis; ADP-L-glycero-beta-D-manno-heptose biosynthesis; ADP-L-glycero-beta-D-manno-heptose from D-glycero-beta-D-manno-heptose 7-phosphate: step 3/4. Functionally, catalyzes the phosphorylation of D-glycero-D-manno-heptose 7-phosphate at the C-1 position to selectively form D-glycero-beta-D-manno-heptose-1,7-bisphosphate. Catalyzes the ADP transfer from ATP to D-glycero-beta-D-manno-heptose 1-phosphate, yielding ADP-D-glycero-beta-D-manno-heptose. The chain is Bifunctional protein HldE from Granulibacter bethesdensis (strain ATCC BAA-1260 / CGDNIH1).